The following is a 257-amino-acid chain: Probable ssDNA-binding protein (257 aa).

The segment at 222 to 257 is disordered; the sequence is AFMEGRENKDDDAKSGNSNAGSQKGIDQEAASDLDD. Positions 225–235 are enriched in basic and acidic residues; sequence EGRENKDDDAK.

Its function is as follows. Required during DNA replication. Displaced viral DNA strands are transiently coated with the ssDNA-binding protein. It is then probably removed by the replisome that performs lagging strand synthesis or during the events that lead up to the recombination process. The sequence is that of Probable ssDNA-binding protein (D11) from Escherichia phage T5 (Enterobacteria phage T5).